The chain runs to 157 residues: MQCPSCQNTDSRVLESRSADAGKCVRRRRECLNCDFRFTTYERVETIPVTVIKRSNAKEIFCRSKLLNGLTRACEKTSINNQKIEAIVDEIETHLQQSNLKEISSVDLGEMILLHLKSVNEVAYIRFASVYRQFNGIEDFIDTLESFKPSNKFAAIS.

A zinc finger spans residues 3–34; that stretch reads CPSCQNTDSRVLESRSADAGKCVRRRRECLNC. Residues 49–139 enclose the ATP-cone domain; sequence VTVIKRSNAK…VYRQFNGIED (91 aa).

Belongs to the NrdR family. The cofactor is Zn(2+).

In terms of biological role, negatively regulates transcription of bacterial ribonucleotide reductase nrd genes and operons by binding to NrdR-boxes. This is Transcriptional repressor NrdR from Prochlorococcus marinus (strain SARG / CCMP1375 / SS120).